We begin with the raw amino-acid sequence, 440 residues long: Methylenetetrahydrofolate--tRNA-(uracil-5-)-methyltransferase TrmFO (440 aa).

Gly-14–Gly-19 serves as a coordination point for FAD.

It belongs to the MnmG family. TrmFO subfamily. Requires FAD as cofactor.

The protein resides in the cytoplasm. It carries out the reaction uridine(54) in tRNA + (6R)-5,10-methylene-5,6,7,8-tetrahydrofolate + NADH + H(+) = 5-methyluridine(54) in tRNA + (6S)-5,6,7,8-tetrahydrofolate + NAD(+). It catalyses the reaction uridine(54) in tRNA + (6R)-5,10-methylene-5,6,7,8-tetrahydrofolate + NADPH + H(+) = 5-methyluridine(54) in tRNA + (6S)-5,6,7,8-tetrahydrofolate + NADP(+). In terms of biological role, catalyzes the folate-dependent formation of 5-methyl-uridine at position 54 (M-5-U54) in all tRNAs. The protein is Methylenetetrahydrofolate--tRNA-(uracil-5-)-methyltransferase TrmFO of Bdellovibrio bacteriovorus (strain ATCC 15356 / DSM 50701 / NCIMB 9529 / HD100).